Consider the following 252-residue polypeptide: Small ribosomal subunit protein uS2 (252 aa).

It belongs to the universal ribosomal protein uS2 family.

This is Small ribosomal subunit protein uS2 from Chlorobium phaeobacteroides (strain DSM 266 / SMG 266 / 2430).